Reading from the N-terminus, the 102-residue chain is Small ribosomal subunit protein uS10 (102 aa).

Belongs to the universal ribosomal protein uS10 family. Part of the 30S ribosomal subunit.

In terms of biological role, involved in the binding of tRNA to the ribosomes. The chain is Small ribosomal subunit protein uS10 from Streptomyces griseus subsp. griseus (strain JCM 4626 / CBS 651.72 / NBRC 13350 / KCC S-0626 / ISP 5235).